Reading from the N-terminus, the 182-residue chain is Dual-action ribosomal maturation protein DarP (182 aa).

Belongs to the DarP family.

Its subcellular location is the cytoplasm. In terms of biological role, member of a network of 50S ribosomal subunit biogenesis factors which assembles along the 30S-50S interface, preventing incorrect 23S rRNA structures from forming. Promotes peptidyl transferase center (PTC) maturation. This Yersinia pseudotuberculosis serotype O:1b (strain IP 31758) protein is Dual-action ribosomal maturation protein DarP.